A 698-amino-acid chain; its full sequence is Ion-translocating oxidoreductase complex subunit C (698 aa).

4Fe-4S ferredoxin-type domains are found at residues Thr-366–Tyr-397 and Lys-407–Tyr-436. [4Fe-4S] cluster contacts are provided by Cys-377, Cys-380, Cys-383, Cys-387, Cys-416, Cys-419, Cys-422, and Cys-426.

It belongs to the 4Fe4S bacterial-type ferredoxin family. RnfC subfamily. As to quaternary structure, the complex is composed of six subunits: RnfA, RnfB, RnfC, RnfD, RnfE and RnfG. It depends on [4Fe-4S] cluster as a cofactor.

It is found in the cell inner membrane. Part of a membrane-bound complex that couples electron transfer with translocation of ions across the membrane. This is Ion-translocating oxidoreductase complex subunit C from Yersinia pseudotuberculosis serotype O:3 (strain YPIII).